The following is a 288-amino-acid chain: Ankyrin repeat and SOCS box protein 8 (288 aa).

Ser17 is modified (phosphoserine). ANK repeat units lie at residues 52–81 (GTLK…EVNA), 85–113 (YNRT…NPNA), 117–146 (NRDT…SVNA), and 150–179 (NNDT…EVRV). Residues 235–288 (QLCEKLTVLCSAPGTLKTLARYTVRRSLGLQYLPDAVKGLPLPASLKEYLLLLE) form the SOCS box domain.

This sequence belongs to the ankyrin SOCS box (ASB) family. As to quaternary structure, interacts with TBK1; this interaction promotes TBK1 proteasomal degradation. Phosphorylated by TBK1.

It localises to the cytoplasm. It functions in the pathway protein modification; protein ubiquitination. In terms of biological role, may be a substrate-recognition component of a SCF-like ECS (Elongin-Cullin-SOCS-box protein) E3 ubiquitin-protein ligase complex which mediates the ubiquitination and subsequent proteasomal degradation of target proteins. Inhibits IFN-beta production through the IRF3 signaling pathway by targeting TBK1 via 'Lys-48'-linked ubiquitination, leading to its proteasomal degradation. This Pongo abelii (Sumatran orangutan) protein is Ankyrin repeat and SOCS box protein 8 (ASB8).